The following is a 110-amino-acid chain: U1-lycotoxin-Ls1mm (110 aa).

Residues 1 to 20 (MKFVLLFGVLLVTLFSYSSA) form the signal peptide. Residues 21–44 (EMLDDFDQADEDELLSLIEKEEAR) constitute a propeptide that is removed on maturation. Intrachain disulfides connect cysteine 47-cysteine 62, cysteine 54-cysteine 71, cysteine 61-cysteine 89, and cysteine 73-cysteine 87.

The protein belongs to the neurotoxin 19 (CSTX) family. 03 subfamily. As to expression, expressed by the venom gland.

The protein resides in the secreted. This is U1-lycotoxin-Ls1mm from Lycosa singoriensis (Wolf spider).